The following is a 194-amino-acid chain: Probable DNA-directed RNA polymerase subunit delta (194 aa).

The HTH HARE-type domain occupies 14-83 (LSMIEVARAI…GENKWGLRSW (70 aa)). The disordered stretch occupies residues 117 to 194 (GDEDAIDYSD…SDDEEDEEGE (78 aa)).

Belongs to the RpoE family. As to quaternary structure, RNAP is composed of a core of 2 alpha, a beta and a beta' subunits. The core is associated with a delta subunit and one of several sigma factors.

Functionally, participates in both the initiation and recycling phases of transcription. In the presence of the delta subunit, RNAP displays an increased specificity of transcription, a decreased affinity for nucleic acids, and an increased efficiency of RNA synthesis because of enhanced recycling. This Streptococcus mutans serotype c (strain ATCC 700610 / UA159) protein is Probable DNA-directed RNA polymerase subunit delta.